Reading from the N-terminus, the 402-residue chain is Cholinephosphotransferase 1 (402 aa).

At 1–62 (MGLAEGLAAR…LVEKVPLWLA (62 aa)) the chain is on the cytoplasmic side. A helical membrane pass occupies residues 63 to 83 (PNTITMVGLLLNVLSTLILVC). Position 64 (Asn-64) interacts with CDP-choline. The Lumenal portion of the chain corresponds to 84–93 (YCPTATEGAP). The chain crosses the membrane as a helical span at residues 94-118 (FWTYLLCAIGLFVYQSLDAIDGKQA). Mg(2+) contacts are provided by Asp-111 and Asp-114. CDP-choline is bound at residue Arg-119. At 119–125 (RRTNSSS) the chain is on the cytoplasmic side. Residues 126–150 (PLGEMFDHGCDSISIVFVNLGTIAA) traverse the membrane as a helical segment. Mg(2+) is bound at residue Asp-132. Catalysis depends on His-133, which acts as the Proton acceptor. Asp-136 is a Mg(2+) binding site. Over 151-160 (VRLGTLPGWM) the chain is Lumenal. Residues 161–179 (FYCCFVGMFMFYCAQWQTY) traverse the membrane as a helical segment. Over 180-190 (VCGTLKFGIID) the chain is Cytoplasmic. A helical transmembrane segment spans residues 191–207 (VTELQISVTVMFLMTAV). The Lumenal portion of the chain corresponds to 208-222 (CGPELWDYEIPFTGL). The chain crosses the membrane as a helical span at residues 223 to 248 (PMKTIPLLGIIGGTVYSCSNYFRVIL). Residues 249-265 (SGGVGKNGSTVAGTSVL) lie on the Cytoplasmic side of the membrane. Residues 266 to 281 (SPGLHIGLVLLLALMI) form a helical membrane-spanning segment. Residues 282–293 (YKKSTTNLFLQN) are Lumenal-facing. Residues 294 to 316 (PCLYTLAFGFVSAKITIKLVIAH) form a helical membrane-spanning segment. Topologically, residues 317-329 (MTKSEISLQDTAF) are cytoplasmic. Residues 330 to 339 (IGPGLLFFNQ) traverse the membrane as a helical segment. The Lumenal portion of the chain corresponds to 340 to 346 (YFNSFID). The helical transmembrane segment at 347-376 (EYIVLWIAMVISFADLLRYCISVCLQIATH) threads the bilayer. Residues 377 to 402 (LRISVFRISSNQAAEQVQTQKQKLTD) lie on the Cytoplasmic side of the membrane.

It belongs to the CDP-alcohol phosphatidyltransferase class-I family. In terms of assembly, homodimer. It depends on Mg(2+) as a cofactor. Mn(2+) serves as cofactor.

It localises to the golgi apparatus membrane. The catalysed reaction is CDP-choline + a 1,2-diacyl-sn-glycerol = a 1,2-diacyl-sn-glycero-3-phosphocholine + CMP + H(+). It carries out the reaction 1,2-dioctanoyl-sn-glycerol + CDP-choline = 1,2-dioctanoyl-sn-glycero-3-phosphocholine + CMP + H(+). It catalyses the reaction 1-octadecanoyl-2-(5Z,8Z,11Z,14Z-eicosatetraenoyl)-sn-glycerol + CDP-choline = 1-octadecanoyl-2-(5Z,8Z,11Z,14Z-eicosatetraenoyl)-sn-glycero-3-phosphocholine + CMP + H(+). The enzyme catalyses 1-hexadecanoyl-2-(9Z-octadecenoyl)-sn-glycerol + CDP-choline = 1-hexadecanoyl-2-(9Z-octadecenoyl)-sn-glycero-3-phosphocholine + CMP + H(+). The catalysed reaction is 1-hexadecanoyl-2-(4Z,7Z,10Z,13Z,16Z,19Z-docosahexaenoyl)-sn-glycerol + CDP-choline = 1-hexadecanoyl-2-(4Z,7Z,10Z,13Z,16Z,19Z-docosahexaenoyl)-sn-glycero-3-phosphocholine + CMP + H(+). The protein operates within phospholipid metabolism; phosphatidylcholine biosynthesis; phosphatidylcholine from phosphocholine: step 2/2. Its function is as follows. Catalyzes the final step of de novo phosphatidylcholine (PC) synthesis, i.e. the transfer of choline phosphate from CDP-choline to the free hydroxyl of a diacylglycerol (DAG), producing a PC. It thereby plays a central role in the formation and maintenance of vesicular membranes. Shows a high preference for CDP-choline over CDP-ethanolamine as substrate. This chain is Cholinephosphotransferase 1 (chpt1), found in Xenopus laevis (African clawed frog).